The following is a 477-amino-acid chain: Glycogen synthase (477 aa).

Lys15 lines the ADP-alpha-D-glucose pocket.

This sequence belongs to the glycosyltransferase 1 family. Bacterial/plant glycogen synthase subfamily.

It catalyses the reaction [(1-&gt;4)-alpha-D-glucosyl](n) + ADP-alpha-D-glucose = [(1-&gt;4)-alpha-D-glucosyl](n+1) + ADP + H(+). It participates in glycan biosynthesis; glycogen biosynthesis. Functionally, synthesizes alpha-1,4-glucan chains using ADP-glucose. This chain is Glycogen synthase, found in Shigella dysenteriae serotype 1 (strain Sd197).